A 162-amino-acid polypeptide reads, in one-letter code: Endoribonuclease YbeY (162 aa).

3 residues coordinate Zn(2+): histidine 128, histidine 132, and histidine 138.

This sequence belongs to the endoribonuclease YbeY family. The cofactor is Zn(2+).

Its subcellular location is the cytoplasm. Its function is as follows. Single strand-specific metallo-endoribonuclease involved in late-stage 70S ribosome quality control and in maturation of the 3' terminus of the 16S rRNA. This Levilactobacillus brevis (strain ATCC 367 / BCRC 12310 / CIP 105137 / JCM 1170 / LMG 11437 / NCIMB 947 / NCTC 947) (Lactobacillus brevis) protein is Endoribonuclease YbeY.